Here is a 2016-residue protein sequence, read N- to C-terminus: Cell adhesion molecule Dscam1 (2016 aa).

The signal sequence occupies residues 1 to 28; the sequence is MNMPNERLKWLMLFAAVALIACGSQTLA. At 29–1618 the chain is on the extracellular side; it reads ANPPDADQKG…TIRIILSNLN (1590 aa). 9 Ig-like C2-type domains span residues 39 to 134, 138 to 230, 247 to 338, 342 to 421, 428 to 522, 527 to 613, 618 to 712, 715 to 807, and 812 to 904; these read PVFL…VHVR, AQYY…TRLS, PKIN…TVLT, PLSA…AELK, PPVI…AKLN, PYIR…LEVQ, PQVL…LQVN, PRWI…IMIS, and PEFT…ASIN. N-linked (GlcNAc...) asparagine glycosylation is present at N53. C61 and C117 are joined by a disulfide. Residues D144, N146, and L161 each coordinate Zn(2+). 13 disulfides stabilise this stretch: C160–C217, C160–T219, C160–K220, C269–C322, P270–V323, A276–G329, C364–C405, C450–C506, C547–C596, C640–C694, V641–C694, V641–I695, and C736–C790. N325 carries N-linked (GlcNAc...) asparagine glycosylation. N-linked (GlcNAc...) asparagine glycans are attached at residues N492 and N577. N820 carries an N-linked (GlcNAc...) asparagine glycan. A disulfide bridge links C833 with C890. Fibronectin type-III domains lie at 913-1007, 1012-1116, 1117-1213, and 1217-1310; these read MPYA…TAEE, KPQN…TPSQ, PPSD…TEPD, and APTD…PSDQ. 3 N-linked (GlcNAc...) asparagine glycosylation sites follow: N1022, N1055, and N1186. The 83-residue stretch at 1312-1394 folds into the Ig-like C2-type 10 domain; that stretch reads PAKIASFDDT…ENSIAKDSIT (83 aa). A disulfide bridge links C1334 with C1382. Fibronectin type-III domains lie at 1402 to 1495 and 1499 to 1594; these read PPQS…TKGQ and LPEK…TGGT. The helical transmembrane segment at 1619–1639 threads the bilayer; it reads LVVPVVAALLVIIIAIIVICI. The Cytoplasmic portion of the chain corresponds to 1640–2016; sequence LRSKGNHHKD…GFTAYDTMAV (377 aa). Residues 1685–1688 carry the PXXP motif 1; SH3-binding motif; the sequence is PPVP. Residues 1688–1719 are disordered; it reads PGSNYNTCDRIKRGRGGLRSNHSTWDPRRNPN. The PXXP motif 2; SH3-binding signature appears at 1727–1730; sequence PPVP. Disordered regions lie at residues 1787–1846 and 1862–2016; these read GHAG…DDPA and SQGG…TMAV. The span at 1826-1836 shows a compositional bias: polar residues; the sequence is KNSQGGQSSIY. The YXXP motif 1; potential SH2-binding motif lies at 1842 to 1845; that stretch reads YDDP. Positions 1875–1878 match the YXXP motif 2; potential SH2-binding motif; the sequence is YDDP. Over residues 1897-1918 the composition is skewed to low complexity; that stretch reads GQPYDHYGSRGSMGRRSIGSAR. The short motif at 1925–1932 is the Polyproline tract (probable SH3-binding) element; that stretch reads PEPPPPPP. 2 stretches are compositionally biased toward basic and acidic residues: residues 1944–1962 and 1974–1993; these read DSKE…DHGP and QPKD…RNET. Positions 1994-2004 are enriched in polar residues; the sequence is GPKQLQLQQAN.

As to quaternary structure, homodimer (via extracellular region); alternative splicing produces a potential 19,008 different ectodomains and the majority of these show strong isoform-specific homodimerization. Interacts (via cytoplasmic domain) with dock/dreadlocks (via SH2 and SH3 domains); the interaction is direct and may require Dscam1 to be phosphorylated. In terms of processing, phosphorylated on tyrosine residues in the intracellular domain. Tyrosine protein kinase Src42A and possibly Src64B are involved in this phosphorylation. Post-translationally, glycosylation on Asn-53 and Asn-325 is involved in stabilizing dimerization. Proteolytically processed, probably to generate a secreted form. In terms of tissue distribution, secreted into the hemolymph (at protein level). Expressed in brain and eye-antennal imaginal disks, including R3/R4 and R7 photoreceptor cells. Individual R3/R4 cells express between 14 and 50 randomly generated mRNAs encoding distinct isoforms.

It localises to the cell membrane. The protein localises to the cell projection. It is found in the neuron projection. Its subcellular location is the axon. The protein resides in the perikaryon. It localises to the dendrite. The protein localises to the secreted. Functionally, cell surface receptor involved in guidance and targeting of growing nerve axons. Required during Bolwig's organ differentiation for accurate and efficient targeting of photoreceptor neuron axons to their synaptic targets in the brain via the P2 intermediate target neuron. Involved in isoneural self-avoidance during dendrite arborization but not in heteroneural recognition and repulsion during tiling by related neurons of the same class. Involved in regulating axon bifurcation and divergent extension in the developing mushroom body. Essential for axon arborisation in ellipsoid body. Exhibits an extraordinary level of molecular diversity resulting from alternative splicing. Isoforms differing in their ectodomain makeup show a high degree of functional redundancy while isoforms with different transmembrane domains are involved in different neuronal morphogenetic processes and are differentially targeted to dendrites or axons. The vast majority of isoforms exhibit strong isoform-specific homophilic binding. Individual cells express a distinct randomly generated repertoire of isoforms. Cell surfaces bearing identical repertoires of Dscam1 isoforms, such as those from the same cell, trigger recognition and avoidance. A subset of isoforms is expressed in fat body cells and hemocytes, cells that are part of the insect immune response, and these isoforms are secreted into the hemolymph. The secreted form comprising the ectodomain can bind to bacteria, such as Escherichia coli, and may act as an opsonin enhancing their phagocytosis by hemocytes. This chain is Cell adhesion molecule Dscam1, found in Drosophila melanogaster (Fruit fly).